Here is a 179-residue protein sequence, read N- to C-terminus: Large ribosomal subunit protein uL10 (179 aa).

Belongs to the universal ribosomal protein uL10 family. As to quaternary structure, part of the ribosomal stalk of the 50S ribosomal subunit. The N-terminus interacts with L11 and the large rRNA to form the base of the stalk. The C-terminus forms an elongated spine to which L12 dimers bind in a sequential fashion forming a multimeric L10(L12)X complex.

Forms part of the ribosomal stalk, playing a central role in the interaction of the ribosome with GTP-bound translation factors. This is Large ribosomal subunit protein uL10 from Thermomicrobium roseum (strain ATCC 27502 / DSM 5159 / P-2).